A 461-amino-acid polypeptide reads, in one-letter code: Ornithine decarboxylase (461 aa).

Lys69 bears the N6-(pyridoxal phosphate)lysine mark. Pyridoxal 5'-phosphate-binding positions include Ser200, Gly237, and 274–277; that span reads EPGR. Residue Ser303 is modified to Phosphoserine; by CK2. Residue 331–332 participates in substrate binding; sequence YD. The Proton donor; shared with dimeric partner role is filled by Cys360. Position 360 is an S-nitrosocysteine (Cys360). Substrate is bound at residue Asp361. Residue Tyr389 participates in pyridoxal 5'-phosphate binding.

This sequence belongs to the Orn/Lys/Arg decarboxylase class-II family. In terms of assembly, homodimer. Only the dimer is catalytically active, as the active sites are constructed of residues from both monomers. Does not form a heterodimer with AZIN2. Pyridoxal 5'-phosphate is required as a cofactor. As to expression, expressed during testis development in the outer part of the seminiferous tubules.

The catalysed reaction is L-ornithine + H(+) = putrescine + CO2. Its pathway is amine and polyamine biosynthesis; putrescine biosynthesis via L-ornithine pathway; putrescine from L-ornithine: step 1/1. Its activity is regulated as follows. Inhibited by antizymes (AZs) OAZ1, OAZ2 and OAZ3 in response to polyamine levels. AZs inhibit the assembly of the functional homodimer by binding to ODC monomers. Additionally, OAZ1 targets ODC monomers for ubiquitin-independent proteolytic destruction by the 26S proteasome. Its function is as follows. Catalyzes the first and rate-limiting step of polyamine biosynthesis that converts ornithine into putrescine, which is the precursor for the polyamines, spermidine and spermine. Polyamines are essential for cell proliferation and are implicated in cellular processes, ranging from DNA replication to apoptosis. The sequence is that of Ornithine decarboxylase (Odc1) from Mus musculus (Mouse).